The primary structure comprises 424 residues: GTPase Obg (424 aa).

Residues 1–158 form the Obg domain; the sequence is MFVDRAEVFV…RYISLELKIL (158 aa). Positions 21–42 are disordered; the sequence is SFRREKYVPRGGPDGGDGGKGG. Gly residues predominate over residues 32–42; sequence GPDGGDGGKGG. The OBG-type G domain maps to 159-331; that stretch reads ADVGLLGFPN…LMKEAAAMLT (173 aa). GTP-binding positions include 165–172, 190–194, 212–215, 282–285, and 312–314; these read GFPNVGKS, FTTLS, DIPG, NKAD, and SAA. Mg(2+) is bound by residues serine 172 and threonine 192. The region spanning 345 to 424 is the OCT domain; the sequence is KFIPEEKRFT…LNDFEFDYIL (80 aa).

This sequence belongs to the TRAFAC class OBG-HflX-like GTPase superfamily. OBG GTPase family. In terms of assembly, monomer. The cofactor is Mg(2+).

It is found in the cytoplasm. Its function is as follows. An essential GTPase which binds GTP, GDP and possibly (p)ppGpp with moderate affinity, with high nucleotide exchange rates and a fairly low GTP hydrolysis rate. Plays a role in control of the cell cycle, stress response, ribosome biogenesis and in those bacteria that undergo differentiation, in morphogenesis control. This chain is GTPase Obg, found in Clostridium kluyveri (strain NBRC 12016).